A 281-amino-acid chain; its full sequence is MAQITMSDMLKAGLHFGHQTRRWNPKMKQFILTQRNGIHIINLFKSLDMIDKAYDFIKTTVAHNGTVLFVGTKKQAQEAIANQATRVNMPYVSERWLGGMLTNFQTVSKRVNRLKELEEMDFTDVHGSGLTKKELLLLEREKDKLNKQLGGIRNMNRTPSAMFVVDITKEALAVEEAHKLGIPVVAIVDTNADPDTVEYPIPANDDAIRGIELLTSLMADAVAEGLLERSGANKAEGEAAEQPMAAWEKELLTNEAPAEASAEAAAPAAAEGETAEAPKAE.

The interval 233–281 (NKAEGEAAEQPMAAWEKELLTNEAPAEASAEAAAPAAAEGETAEAPKAE) is disordered. Residues 255 to 275 (EAPAEASAEAAAPAAAEGETA) are compositionally biased toward low complexity.

Belongs to the universal ribosomal protein uS2 family.

The chain is Small ribosomal subunit protein uS2 from Bifidobacterium longum (strain DJO10A).